The sequence spans 338 residues: Biotin synthase (338 aa).

Residues 63-290 (NGVQLSTLLS…RAKVRLSAGR (228 aa)) enclose the Radical SAM core domain. [4Fe-4S] cluster is bound by residues Cys-78, Cys-82, and Cys-85. The [2Fe-2S] cluster site is built by Cys-122, Cys-153, Cys-213, and Arg-285.

This sequence belongs to the radical SAM superfamily. Biotin synthase family. As to quaternary structure, homodimer. [4Fe-4S] cluster serves as cofactor. Requires [2Fe-2S] cluster as cofactor.

It carries out the reaction (4R,5S)-dethiobiotin + (sulfur carrier)-SH + 2 reduced [2Fe-2S]-[ferredoxin] + 2 S-adenosyl-L-methionine = (sulfur carrier)-H + biotin + 2 5'-deoxyadenosine + 2 L-methionine + 2 oxidized [2Fe-2S]-[ferredoxin]. The protein operates within cofactor biosynthesis; biotin biosynthesis; biotin from 7,8-diaminononanoate: step 2/2. Its function is as follows. Catalyzes the conversion of dethiobiotin (DTB) to biotin by the insertion of a sulfur atom into dethiobiotin via a radical-based mechanism. The chain is Biotin synthase from Nitrosomonas eutropha (strain DSM 101675 / C91 / Nm57).